The primary structure comprises 397 residues: Xylose isomerase (397 aa).

Active-site residues include His-54 and Asp-57. Residues Glu-181, Glu-217, His-220, Asp-245, Asp-255, Asp-257, and Asp-293 each coordinate Mg(2+).

It belongs to the xylose isomerase family. As to quaternary structure, homotetramer. Mg(2+) is required as a cofactor.

It is found in the cytoplasm. The enzyme catalyses alpha-D-xylose = alpha-D-xylulofuranose. This is Xylose isomerase from Clavibacter michiganensis subsp. michiganensis (strain NCPPB 382).